An 804-amino-acid polypeptide reads, in one-letter code: Leucine--tRNA ligase (804 aa).

A 'HIGH' region motif is present at residues 40–51 (PYPSGAGLHVGH). The 'KMSKS' region signature appears at 576 to 580 (KMSKS). K579 lines the ATP pocket.

It belongs to the class-I aminoacyl-tRNA synthetase family.

The protein resides in the cytoplasm. The catalysed reaction is tRNA(Leu) + L-leucine + ATP = L-leucyl-tRNA(Leu) + AMP + diphosphate. This Bacillus velezensis (strain DSM 23117 / BGSC 10A6 / LMG 26770 / FZB42) (Bacillus amyloliquefaciens subsp. plantarum) protein is Leucine--tRNA ligase.